A 739-amino-acid chain; its full sequence is Catalase-peroxidase (739 aa).

Residues 1–23 (MLKKIVTALGMSGMLLAANSAIA) form the signal peptide. A cross-link (tryptophyl-tyrosyl-methioninium (Trp-Tyr) (with M-247)) is located at residues 100–221 (WHDAGTYRLA…YAATQMGLIY (122 aa)). His-101 functions as the Proton acceptor in the catalytic mechanism. Residues 221–247 (YVNPEGPDGKPDIKGAASEIRQAFRAM) constitute a cross-link (tryptophyl-tyrosyl-methioninium (Tyr-Met) (with W-100)). Heme b is bound at residue His-262.

This sequence belongs to the peroxidase family. Peroxidase/catalase subfamily. Homodimer or homotetramer. Requires heme b as cofactor. Formation of the three residue Trp-Tyr-Met cross-link is important for the catalase, but not the peroxidase activity of the enzyme.

The catalysed reaction is H2O2 + AH2 = A + 2 H2O. It catalyses the reaction 2 H2O2 = O2 + 2 H2O. Bifunctional enzyme with both catalase and broad-spectrum peroxidase activity. In Francisella philomiragia subsp. philomiragia (strain ATCC 25017 / CCUG 19701 / FSC 153 / O#319-036), this protein is Catalase-peroxidase.